Consider the following 434-residue polypeptide: MTNPAPIEAPLPKGVTDFLPEKADKIGYIEGKIRRVFELWGFRRIITPLLEFQDVMAAGLGEDLKERTFRFDDRQTGKLLAIPSDITPQVARIVATRMRGCPLPHRLYYIGRVLRHVELQSGRSRETFQAGVELIGLDSPEADAEMVAMAVEILKGLGFEEFKVDLGHTGFIRGVMAASGLGGDARRRLQEAVGKKDSSAVRAILETEPVADRIKEELAALPRLFGGREVLAEAARVATSDSSRRALDNIAQVLDILDIHGVSDHLTLDLGEIRGLDYHSGLTFEGFVTGIGEAVCSGGRYDNLTQRYGYPAPATGFAFNILALLNALEKRPDVEASKTRDLLIFNLKDDRREALEIAQHLRALGYSTARDIIHRDFNDSLDYARRMNILRMMVIGGDYCAADEAYVVRVADKRGTAVKKADLMRNDFSLNTLP.

This sequence belongs to the class-II aminoacyl-tRNA synthetase family. HisZ subfamily. In terms of assembly, heteromultimer composed of HisG and HisZ subunits.

The protein localises to the cytoplasm. The protein operates within amino-acid biosynthesis; L-histidine biosynthesis; L-histidine from 5-phospho-alpha-D-ribose 1-diphosphate: step 1/9. Required for the first step of histidine biosynthesis. May allow the feedback regulation of ATP phosphoribosyltransferase activity by histidine. This Geobacter metallireducens (strain ATCC 53774 / DSM 7210 / GS-15) protein is ATP phosphoribosyltransferase regulatory subunit.